The sequence spans 255 residues: Electron transfer flavoprotein subunit beta (255 aa).

Residue Ala2 is modified to N-acetylalanine. Residues Ala9, 39-42, Cys66, and 123-134 contribute to the AMP site; these read NPFC and GKQAIDDDCNQT. A recognition loop region spans residues 183-205; the sequence is ADLRLNEPRYATLPNIMKAKKKK. An N6,N6,N6-trimethyllysine; by ETFBKMT; alternate modification is found at Lys200. At Lys200 the chain carries N6-acetyllysine; alternate. Lys200 is subject to N6-methyllysine; alternate. Lys203 is modified (N6,N6,N6-trimethyllysine; by ETFBKMT). At Lys210 the chain carries N6-acetyllysine; alternate. Lys210 is subject to N6-succinyllysine; alternate. Phosphoserine occurs at positions 223 and 226. Lys238 is modified (N6-acetyllysine). Lys248 is modified (N6-acetyllysine; alternate). At Lys248 the chain carries N6-succinyllysine; alternate.

This sequence belongs to the ETF beta-subunit/FixA family. As to quaternary structure, heterodimer composed of ETFA and ETFB. Identified in a complex that contains ETFA, ETFB and ETFRF1. Interacts with ACADM. In terms of processing, methylated. Trimethylation at Lys-200 and Lys-203 may negatively regulate the activity in electron transfer from acyl-CoA dehydrogenases.

It is found in the mitochondrion matrix. Functionally, heterodimeric electron transfer flavoprotein that accepts electrons from several mitochondrial dehydrogenases, including acyl-CoA dehydrogenases, glutaryl-CoA and sarcosine dehydrogenase. It transfers the electrons to the main mitochondrial respiratory chain via ETF-ubiquinone oxidoreductase. Required for normal mitochondrial fatty acid oxidation and normal amino acid metabolism. ETFB binds an AMP molecule that probably has a purely structural role. The sequence is that of Electron transfer flavoprotein subunit beta from Pongo abelii (Sumatran orangutan).